Consider the following 277-residue polypeptide: GATA transcription factor 15 (277 aa).

A disordered region spans residues 52-94; the sequence is AYDDHSTVTTSPSSPSSSSTGSVDCTLSLGTPSSRRAEPVAAA. Residues 58-74 show a composition bias toward low complexity; the sequence is TVTTSPSSPSSSSTGSV. The GATA-type zinc finger occupies 154–179; that stretch reads CANCGTASTPLWRNGPRGPKSLCNAC.

The protein belongs to the type IV zinc-finger family. Class B subfamily.

Probable transcription factor that regulates organogenesis during transition from the vegetative to the reproductive phase. Regulates the expression of CYP78A11/PLA1, HD3A and MADS1 during reproductive development in rice. May act upstream of CYP78A11/PLA1 during panicle development. Acts independently of the photoperiodic and gibberellin signaling pathways. The chain is GATA transcription factor 15 from Oryza sativa subsp. indica (Rice).